The sequence spans 427 residues: UDP-N-acetyl-D-mannosamine dehydrogenase (427 aa).

Residues tyrosine 19, isoleucine 20, aspartate 39, arginine 44, threonine 91, and threonine 130 each contribute to the NAD(+) site. Arginine 155, valine 156, lysine 207, asparagine 211, arginine 214, histidine 245, arginine 247, and glycine 258 together coordinate UDP-N-acetyl-alpha-D-mannosaminouronate. Lysine 207 (proton donor/acceptor) is an active-site residue. Cysteine 261 functions as the Nucleophile in the catalytic mechanism. Positions 318 and 319 each coordinate UDP-N-acetyl-alpha-D-mannosaminouronate. Arginine 326 lines the NAD(+) pocket. Lysine 404 is a UDP-N-acetyl-alpha-D-mannosaminouronate binding site.

This sequence belongs to the UDP-glucose/GDP-mannose dehydrogenase family. Homotetramer; probably dimer of dimers.

The enzyme catalyses UDP-N-acetyl-alpha-D-mannosamine + 2 NAD(+) + H2O = UDP-N-acetyl-alpha-D-mannosaminouronate + 2 NADH + 3 H(+). In terms of biological role, catalyzes the four-electron oxidation of UDP-N-acetyl-D-mannosamine (UDP-ManNAc), reducing NAD(+) and releasing UDP-N-acetylmannosaminuronic acid (UDP-ManNAcA). Cannot use NADP instead of NAD. In Methanococcus maripaludis (strain DSM 14266 / JCM 13030 / NBRC 101832 / S2 / LL), this protein is UDP-N-acetyl-D-mannosamine dehydrogenase (wecC).